Reading from the N-terminus, the 341-residue chain is Glycerol-3-phosphate dehydrogenase [NAD(P)+] (341 aa).

Ser-14, Phe-15, Arg-35, and Lys-108 together coordinate NADPH. Sn-glycerol 3-phosphate contacts are provided by Lys-108 and Gly-136. Ala-140 lines the NADPH pocket. Lys-191, Asp-244, Ser-254, Arg-255, and Asn-256 together coordinate sn-glycerol 3-phosphate. Lys-191 serves as the catalytic Proton acceptor. Arg-255 is a binding site for NADPH. NADPH-binding residues include Val-279 and Glu-281.

Belongs to the NAD-dependent glycerol-3-phosphate dehydrogenase family.

It is found in the cytoplasm. The enzyme catalyses sn-glycerol 3-phosphate + NAD(+) = dihydroxyacetone phosphate + NADH + H(+). The catalysed reaction is sn-glycerol 3-phosphate + NADP(+) = dihydroxyacetone phosphate + NADPH + H(+). The protein operates within membrane lipid metabolism; glycerophospholipid metabolism. Catalyzes the reduction of the glycolytic intermediate dihydroxyacetone phosphate (DHAP) to sn-glycerol 3-phosphate (G3P), the key precursor for phospholipid synthesis. The polypeptide is Glycerol-3-phosphate dehydrogenase [NAD(P)+] (Pseudomonas syringae pv. tomato (strain ATCC BAA-871 / DC3000)).